Reading from the N-terminus, the 320-residue chain is Cytochrome f (320 aa).

The N-terminal stretch at Met-1 to Ala-35 is a signal peptide. 4 residues coordinate heme: Tyr-36, Cys-56, Cys-59, and His-60. A helical transmembrane segment spans residues Val-286–Lys-306.

It belongs to the cytochrome f family. The 4 large subunits of the cytochrome b6-f complex are cytochrome b6, subunit IV (17 kDa polypeptide, petD), cytochrome f and the Rieske protein, while the 4 small subunits are PetG, PetL, PetM and PetN. The complex functions as a dimer. Requires heme as cofactor.

Its subcellular location is the plastid thylakoid membrane. Its function is as follows. Component of the cytochrome b6-f complex, which mediates electron transfer between photosystem II (PSII) and photosystem I (PSI), cyclic electron flow around PSI, and state transitions. This Cuscuta gronovii (Common dodder) protein is Cytochrome f.